A 183-amino-acid polypeptide reads, in one-letter code: Tail fiber assembly protein (183 aa).

This sequence belongs to the tfa family.

Chaperone involved, together with gp57, in the assembly of the distal-half tail fiber of T4. It is necessary for the maturation of protein gp37 to the dimeric structural subunit P37. The protein is Tail fiber assembly protein (38) of Escherichia coli (Bacteriophage T4).